An 896-amino-acid polypeptide reads, in one-letter code: UPF0182 protein GM21_2279 (896 aa).

7 consecutive transmembrane segments (helical) span residues 6 to 26, 46 to 66, 99 to 119, 158 to 180, 201 to 221, 245 to 265, and 271 to 291; these read MTFI…LLSF, VYAQ…FLQL, LVRP…GNWG, LLKS…AYYV, LAVL…LESF, TLRI…LGIW, and LALG…RVYP.

It belongs to the UPF0182 family.

It is found in the cell membrane. The chain is UPF0182 protein GM21_2279 from Geobacter sp. (strain M21).